A 240-amino-acid chain; its full sequence is 2,3,4,5-tetrahydropyridine-2,6-dicarboxylate N-acetyltransferase (240 aa).

This sequence belongs to the transferase hexapeptide repeat family. DapH subfamily.

It carries out the reaction (S)-2,3,4,5-tetrahydrodipicolinate + acetyl-CoA + H2O = L-2-acetamido-6-oxoheptanedioate + CoA. The protein operates within amino-acid biosynthesis; L-lysine biosynthesis via DAP pathway; LL-2,6-diaminopimelate from (S)-tetrahydrodipicolinate (acetylase route): step 1/3. In terms of biological role, catalyzes the transfer of an acetyl group from acetyl-CoA to tetrahydrodipicolinate. The chain is 2,3,4,5-tetrahydropyridine-2,6-dicarboxylate N-acetyltransferase from Shouchella clausii (strain KSM-K16) (Alkalihalobacillus clausii).